We begin with the raw amino-acid sequence, 419 residues long: UDP-N-acetylglucosamine 1-carboxyvinyltransferase (419 aa).

A phosphoenolpyruvate-binding site is contributed by K22–N23. R93 contacts UDP-N-acetyl-alpha-D-glucosamine. C117 acts as the Proton donor in catalysis. C117 bears the 2-(S-cysteinyl)pyruvic acid O-phosphothioketal mark. Residues D306 and I328 each coordinate UDP-N-acetyl-alpha-D-glucosamine.

It belongs to the EPSP synthase family. MurA subfamily.

The protein resides in the cytoplasm. The enzyme catalyses phosphoenolpyruvate + UDP-N-acetyl-alpha-D-glucosamine = UDP-N-acetyl-3-O-(1-carboxyvinyl)-alpha-D-glucosamine + phosphate. It participates in cell wall biogenesis; peptidoglycan biosynthesis. Functionally, cell wall formation. Adds enolpyruvyl to UDP-N-acetylglucosamine. The protein is UDP-N-acetylglucosamine 1-carboxyvinyltransferase of Ruthia magnifica subsp. Calyptogena magnifica.